The primary structure comprises 565 residues: Phosphatidylinositol 4-kinase gamma 4 (565 aa).

2 consecutive Ubiquitin-like domains span residues 32 to 104 (IVIF…LVVR) and 109 to 187 (RAIS…RPAK). One can recognise a PI3K/PI4K catalytic domain in the interval 257–542 (GYLPVMSTEG…AILPGTSEET (286 aa)). The tract at residues 263-269 (STEGSGG) is G-loop. ATP contacts are provided by residues 264-270 (TEGSGGV) and Lys-286. Residues 291 to 311 (EPMAKNNPRGLPLSTDGEGLK) form a disordered region. 369-372 (QLFV) lines the ATP pocket. The tract at residues 402–410 (ANADRHAGN) is catalytic loop. The activation loop stretch occupies residues 425–451 (PIDHGYCLPEKFEDCTFEWLYWPQARE). Asp-427 lines the ATP pocket.

The protein belongs to the PI3/PI4-kinase family. Type II PI4K subfamily. As to quaternary structure, interacts with FTIP1 and RPN10. In terms of tissue distribution, specifically expressed in the phloem including companion cells.

It is found in the nucleus. It localises to the endoplasmic reticulum. The enzyme catalyses a 1,2-diacyl-sn-glycero-3-phospho-(1D-myo-inositol) + ATP = a 1,2-diacyl-sn-glycero-3-phospho-(1D-myo-inositol 4-phosphate) + ADP + H(+). Its function is as follows. The phosphorylation of phosphatidylinositol (PI) to PI4P is the first committed step in the generation of phosphatidylinositol 4,5-bisphosphate (PIP2), a precursor of the second messenger inositol 1,4,5-trisphosphate (InsP3). Involved in the control of flowering under long day conditions by promoting degradation of FTIP1. Recruits FTIP1 for degradation by the 26S proteasome in leaves, which affects RFT1 transport to the shoot apical meristem (SAM). This chain is Phosphatidylinositol 4-kinase gamma 4, found in Oryza sativa subsp. japonica (Rice).